We begin with the raw amino-acid sequence, 304 residues long: Probable 5-dehydro-4-deoxyglucarate dehydratase (304 aa).

It belongs to the DapA family.

The catalysed reaction is 5-dehydro-4-deoxy-D-glucarate + H(+) = 2,5-dioxopentanoate + CO2 + H2O. The protein operates within carbohydrate acid metabolism; D-glucarate degradation; 2,5-dioxopentanoate from D-glucarate: step 2/2. This Rhodococcus opacus (strain B4) protein is Probable 5-dehydro-4-deoxyglucarate dehydratase.